The chain runs to 345 residues: Isocitrate/homoisocitrate dehydrogenase (345 aa).

69–71 contributes to the NADH binding site; it reads TTT. Residues arginine 86, arginine 96, arginine 111, tyrosine 118, lysine 163, and asparagine 165 each contribute to the (2R,3S)-homoisocitrate site. Asparagine 165 is a binding site for NADH. Positions 194, 218, and 222 each coordinate Mg(2+). NADH-binding positions include 251–255 and asparagine 263; that span reads GSAPD.

It belongs to the isocitrate and isopropylmalate dehydrogenases family. It depends on Mn(2+) as a cofactor. The cofactor is Mg(2+).

The enzyme catalyses D-threo-isocitrate + NAD(+) = 2-oxoglutarate + CO2 + NADH. It catalyses the reaction (2R,3S)-homoisocitrate + NAD(+) = 2-oxoadipate + CO2 + NADH. Its pathway is amino-acid biosynthesis; L-lysine biosynthesis via AAA pathway; L-alpha-aminoadipate from 2-oxoglutarate: step 4/5. Functionally, catalyzes the NAD(+)-dependent oxidative decarboxylation of homoisocitrate to 2-oxoadipate (alpha-ketoadipate), and of isocitrate to 2-oxoglutarate, at near equal efficiency. May thus play a dual role in glutamate and lysine biosynthesis in vivo. Preferentially uses NAD over NADP. The sequence is that of Isocitrate/homoisocitrate dehydrogenase from Pyrococcus horikoshii (strain ATCC 700860 / DSM 12428 / JCM 9974 / NBRC 100139 / OT-3).